Consider the following 342-residue polypeptide: Mitochondrial fission factor (342 aa).

The Cytoplasmic segment spans residues 1–322; it reads MSKGTSSDTS…ENKERAKREM (322 aa). Phosphothreonine is present on Thr-115. Phosphoserine is present on Ala-146. Arg-149 is subject to Phosphothreonine. Residues Lys-151, Ser-155, Ser-157, and Ser-172 each carry the phosphoserine modification. Thr-200 carries the phosphothreonine modification. A phosphoserine mark is found at Ser-202, Ser-229, Ser-233, and Ser-295. Residues 291–322 adopt a coiled-coil conformation; the sequence is VDAASLRRQIIKLNRRLQLLEEENKERAKREM. A helical; Anchor for type IV membrane protein transmembrane segment spans residues 323–340; sequence VMYSITVAFWLLNSWLWF. At 341-342 the chain is on the mitochondrial intermembrane side; it reads RR.

The protein belongs to the Tango11 family. Homodimer. Interacts with DNM1L. Interacts with C11orf65/MFI; the interaction inhibits MFF interaction with DNM1L. As to expression, highly expressed in heart, kidney, liver, brain, muscle, and stomach.

Its subcellular location is the mitochondrion outer membrane. It localises to the peroxisome. It is found in the cytoplasmic vesicle. The protein resides in the secretory vesicle. The protein localises to the synaptic vesicle. In terms of biological role, plays a role in mitochondrial and peroxisomal fission. Promotes the recruitment and association of the fission mediator dynamin-related protein 1 (DNM1L) to the mitochondrial surface. May be involved in regulation of synaptic vesicle membrane dynamics by recruitment of DNM1L to clathrin-containing vesicles. The protein is Mitochondrial fission factor (MFF) of Homo sapiens (Human).